The chain runs to 447 residues: Glucose-6-phosphate isomerase (447 aa).

Glutamate 288 serves as the catalytic Proton donor. Catalysis depends on residues histidine 309 and lysine 423.

Belongs to the GPI family.

The protein localises to the cytoplasm. The catalysed reaction is alpha-D-glucose 6-phosphate = beta-D-fructose 6-phosphate. The protein operates within carbohydrate biosynthesis; gluconeogenesis. It functions in the pathway carbohydrate degradation; glycolysis; D-glyceraldehyde 3-phosphate and glycerone phosphate from D-glucose: step 2/4. Its function is as follows. Catalyzes the reversible isomerization of glucose-6-phosphate to fructose-6-phosphate. The sequence is that of Glucose-6-phosphate isomerase from Lactobacillus gasseri (strain ATCC 33323 / DSM 20243 / BCRC 14619 / CIP 102991 / JCM 1131 / KCTC 3163 / NCIMB 11718 / NCTC 13722 / AM63).